A 77-amino-acid chain; its full sequence is TSC22 domain family protein 3 (77 aa).

An N-acetylmethionine modification is found at Met-1. Positions 19–40 (LKEQIRELVEKNSQLERENTLL) are leucine-zipper. The disordered stretch occupies residues 41–77 (KTLASPEQLEKFQSRLSPEEPAPETPEAPEAPGGSAV). Ser-45 is modified (phosphoserine). Positions 68-77 (APEAPGGSAV) are enriched in low complexity.

The protein belongs to the TSC-22/Dip/Bun family. Can form homodimers, however it is likely to function as a monomer. Interacts with AP1 and NFKB1. Interacts with MYOD1. Interacts with HDAC1; this interaction affects HDAC1 activity on MYOG promoter and thus inhibits MYOD1 transcriptional activity.

It localises to the cytoplasm. The protein localises to the nucleus. Functionally, protects T-cells from IL2 deprivation-induced apoptosis through the inhibition of FOXO3A transcriptional activity that leads to the down-regulation of the pro-apoptotic factor BCL2L11. In macrophages, plays a role in the anti-inflammatory and immunosuppressive effects of glucocorticoids and IL10. In T-cells, inhibits anti-CD3-induced NFKB1 nuclear translocation. In vitro, suppresses AP1 and NFKB1 DNA-binding activities. Inhibits myogenic differentiation and mediates anti-myogenic effects of glucocorticoids by binding and regulating MYOD1 and HDAC1 transcriptional activity resulting in reduced expression of MYOG. In Sus scrofa (Pig), this protein is TSC22 domain family protein 3 (TSC22D3).